Here is a 271-residue protein sequence, read N- to C-terminus: Phosphatidylinositol transfer protein alpha isoform (271 aa).

A 1,2-diacyl-sn-glycero-3-phospho-(1D-myo-inositol) contacts are provided by Thr59, Lys61, Glu86, Asn90, Thr97, and Lys195. An N6-acetyllysine modification is found at Lys216. Residues 251 to 264 (TKRQLDEMRQKDPV) are compositionally biased toward basic and acidic residues. The segment at 251–271 (TKRQLDEMRQKDPVKGMTADD) is disordered.

It belongs to the PtdIns transfer protein family. PI transfer class I subfamily. Phosphorylated by PKC in a calcium and phosphatidylserine-dependent manner.

The protein localises to the cytoplasm. It localises to the nucleus. It catalyses the reaction a 1,2-diacyl-sn-glycero-3-phosphocholine(in) = a 1,2-diacyl-sn-glycero-3-phosphocholine(out). The catalysed reaction is a 1,2-diacyl-sn-glycero-3-phospho-(1D-myo-inositol)(in) = a 1,2-diacyl-sn-glycero-3-phospho-(1D-myo-inositol)(out). Catalyzes the transfer of phosphatidylinositol (PI) and phosphatidylcholine (PC) between membranes. Shows a preference for PI and PC containing shorter saturated or monosaturated acyl chains at the sn-1 and sn-2 positions. Preference order for PC is C16:1 &gt; C16:0 &gt; C18:1 &gt; C18:0 &gt; C20:4 and for PI is C16:1 &gt; C16:0 &gt; C18:1 &gt; C18:0 &gt; C20:4 &gt; C20:3. This chain is Phosphatidylinositol transfer protein alpha isoform (Pitpna), found in Mus musculus (Mouse).